The primary structure comprises 47 residues: IgA-inducing protein (47 aa).

A signal peptide spans 1–24 (MKKRSVSGCNITILAVVFSHLSAG).

As to expression, expressed in Peyer patches, spleen, thymus, liver and mesenteric lymph node. Expressed at high levels by dendritic cells, and at lower levels by T-cells, monocytes and B-cells.

It is found in the secreted. Its function is as follows. Enhances IgA secretion from B-cells stimulated via CD40. In Bos taurus (Bovine), this protein is IgA-inducing protein (IGIP).